Reading from the N-terminus, the 152-residue chain is 6,7-dimethyl-8-ribityllumazine synthase (152 aa).

Residues F21, 55–57, and 79–81 each bind 5-amino-6-(D-ribitylamino)uracil; these read AFE and CVI. 84 to 85 contributes to the (2S)-2-hydroxy-3-oxobutyl phosphate binding site; it reads ST. H87 functions as the Proton donor in the catalytic mechanism. F112 is a 5-amino-6-(D-ribitylamino)uracil binding site. R126 is a binding site for (2S)-2-hydroxy-3-oxobutyl phosphate.

The protein belongs to the DMRL synthase family. In terms of assembly, forms an icosahedral capsid composed of 60 subunits, arranged as a dodecamer of pentamers.

The enzyme catalyses (2S)-2-hydroxy-3-oxobutyl phosphate + 5-amino-6-(D-ribitylamino)uracil = 6,7-dimethyl-8-(1-D-ribityl)lumazine + phosphate + 2 H2O + H(+). It functions in the pathway cofactor biosynthesis; riboflavin biosynthesis; riboflavin from 2-hydroxy-3-oxobutyl phosphate and 5-amino-6-(D-ribitylamino)uracil: step 1/2. In terms of biological role, catalyzes the formation of 6,7-dimethyl-8-ribityllumazine by condensation of 5-amino-6-(D-ribitylamino)uracil with 3,4-dihydroxy-2-butanone 4-phosphate. This is the penultimate step in the biosynthesis of riboflavin. In Staphylococcus saprophyticus subsp. saprophyticus (strain ATCC 15305 / DSM 20229 / NCIMB 8711 / NCTC 7292 / S-41), this protein is 6,7-dimethyl-8-ribityllumazine synthase.